The following is a 364-amino-acid chain: 3-isopropylmalate dehydrogenase (364 aa).

Residue 79–90 participates in NAD(+) binding; sequence GPKWGTGSVRPE. The substrate site is built by Arg97, Arg107, Arg136, and Asp225. Mg(2+) contacts are provided by Asp225, Asp250, and Asp254. 289-300 contributes to the NAD(+) binding site; that stretch reads GSAPDLPKNKVN.

This sequence belongs to the isocitrate and isopropylmalate dehydrogenases family. Homodimer. It depends on Mg(2+) as a cofactor. The cofactor is Mn(2+).

The protein resides in the cytoplasm. It catalyses the reaction (2R,3S)-3-isopropylmalate + NAD(+) = 4-methyl-2-oxopentanoate + CO2 + NADH. It participates in amino-acid biosynthesis; L-leucine biosynthesis; L-leucine from 3-methyl-2-oxobutanoate: step 3/4. Functionally, catalyzes the oxidation of 3-carboxy-2-hydroxy-4-methylpentanoate (3-isopropylmalate) to 3-carboxy-4-methyl-2-oxopentanoate. The product decarboxylates to 4-methyl-2 oxopentanoate. This chain is 3-isopropylmalate dehydrogenase (LEU2), found in Saccharomyces cerevisiae (strain ATCC 204508 / S288c) (Baker's yeast).